The sequence spans 358 residues: Aminomethyltransferase (358 aa).

It belongs to the GcvT family. In terms of assembly, the glycine cleavage system is composed of four proteins: P, T, L and H.

The enzyme catalyses N(6)-[(R)-S(8)-aminomethyldihydrolipoyl]-L-lysyl-[protein] + (6S)-5,6,7,8-tetrahydrofolate = N(6)-[(R)-dihydrolipoyl]-L-lysyl-[protein] + (6R)-5,10-methylene-5,6,7,8-tetrahydrofolate + NH4(+). In terms of biological role, the glycine cleavage system catalyzes the degradation of glycine. This Francisella philomiragia subsp. philomiragia (strain ATCC 25017 / CCUG 19701 / FSC 153 / O#319-036) protein is Aminomethyltransferase.